A 93-amino-acid chain; its full sequence is N-myc protein (93 aa).

In terms of assembly, efficient DNA binding requires dimerization with another bHLH protein. Binds DNA as a heterodimer with MAX. As to expression, barely detectable in most tissues assayed.

It is found in the nucleus. Functionally, may function as a transcription factor. This chain is N-myc protein (mycn), found in Danio rerio (Zebrafish).